We begin with the raw amino-acid sequence, 239 residues long: Chlorate reductase subunit gamma (239 aa).

The first 27 residues, Met1 to Ala27, serve as a signal peptide directing secretion. His74 and Met138 together coordinate heme b.

As to quaternary structure, heterotrimer of alpha, beta and gamma subunits. The cofactor is heme b.

It localises to the periplasm. Its function is as follows. May transfer electrons to the iron-sulfur centers of ClrB. This Ideonella dechloratans protein is Chlorate reductase subunit gamma (clrC).